We begin with the raw amino-acid sequence, 495 residues long: GTPase Der (495 aa).

EngA-type G domains follow at residues 3-166 and 208-381; these read PVVA…VQDE and IKLA…SCAT. GTP-binding positions include 9–16, 56–60, 118–121, 214–221, 261–265, and 326–329; these read GRPNVGKS, DTGGI, NKTD, DTAGV, and NKWD. One can recognise a KH-like domain in the interval 382-466; sequence RRVSTAMLTR…PIRIQFKEGE (85 aa).

This sequence belongs to the TRAFAC class TrmE-Era-EngA-EngB-Septin-like GTPase superfamily. EngA (Der) GTPase family. As to quaternary structure, associates with the 50S ribosomal subunit.

Its function is as follows. GTPase that plays an essential role in the late steps of ribosome biogenesis. This chain is GTPase Der, found in Pectobacterium atrosepticum (strain SCRI 1043 / ATCC BAA-672) (Erwinia carotovora subsp. atroseptica).